The sequence spans 31 residues: uncharacterized protein (31 aa).

Residues T7–W29 traverse the membrane as a helical segment.

The protein localises to the cell inner membrane. This is an uncharacterized protein from Escherichia coli (strain K12).